The following is a 130-amino-acid chain: ATP synthase epsilon chain, chloroplastic (130 aa).

It belongs to the ATPase epsilon chain family. F-type ATPases have 2 components, CF(1) - the catalytic core - and CF(0) - the membrane proton channel. CF(1) has five subunits: alpha(3), beta(3), gamma(1), delta(1), epsilon(1). CF(0) has three main subunits: a, b and c.

The protein resides in the plastid. Its subcellular location is the chloroplast thylakoid membrane. Its function is as follows. Produces ATP from ADP in the presence of a proton gradient across the membrane. The protein is ATP synthase epsilon chain, chloroplastic of Emiliania huxleyi (Coccolithophore).